Here is a 426-residue protein sequence, read N- to C-terminus: Multifunctional protein ADE2 (426 aa).

An SAICAR synthetase region spans residues 1–261 (MAPAASELKL…WVAERVELLL (261 aa)). An AIR carboxylase region spans residues 262-426 (KTKSQGRVVV…ADKKLRECTL (165 aa)).

This sequence in the N-terminal section; belongs to the SAICAR synthetase family. It in the C-terminal section; belongs to the AIR carboxylase family. Class II subfamily. In terms of assembly, homooctamer.

It carries out the reaction 5-amino-1-(5-phospho-D-ribosyl)imidazole-4-carboxylate + L-aspartate + ATP = (2S)-2-[5-amino-1-(5-phospho-beta-D-ribosyl)imidazole-4-carboxamido]succinate + ADP + phosphate + 2 H(+). The catalysed reaction is 5-amino-1-(5-phospho-D-ribosyl)imidazole-4-carboxylate + H(+) = 5-amino-1-(5-phospho-beta-D-ribosyl)imidazole + CO2. The protein operates within purine metabolism; IMP biosynthesis via de novo pathway; 5-amino-1-(5-phospho-D-ribosyl)imidazole-4-carboxamide from 5-amino-1-(5-phospho-D-ribosyl)imidazole-4-carboxylate: step 1/2. It functions in the pathway purine metabolism; IMP biosynthesis via de novo pathway; 5-amino-1-(5-phospho-D-ribosyl)imidazole-4-carboxylate from 5-amino-1-(5-phospho-D-ribosyl)imidazole (carboxylase route): step 1/1. This is Multifunctional protein ADE2 (AIRC) from Gallus gallus (Chicken).